Consider the following 384-residue polypeptide: Secreted effector protein EspF(U) (384 aa).

6 consecutive repeat copies span residues 96–142 (IXPA…AEHG), 143–189 (IQPA…AEHG), 190–236 (IQPA…AEHG), 237–283 (IZPA…AEHG), 284–330 (IQPA…AEHG), and 331–377 (IQPA…AEHG). The tract at residues 96–377 (IXPARSMAEH…RLMQHLAEHG (282 aa)) is 6 X 48 AA approximate tandem repeats. Positions 247–266 (IPPAPNWPAPPPPVQNEQSR) are disordered. The span at 248–260 (PPAPNWPAPPPPV) shows a compositional bias: pro residues.

It belongs to the EspF(U)/TccP family. Interacts with host BAIAP2 and host WASL/N-WASP. Can also interact with host proteins BAIAP2L1 and WAS/WASP.

Its subcellular location is the secreted. It localises to the host cytoplasm. Its function is as follows. Required for efficient pedestal formation in host epithelial cells during infection. Acts as an intermediate between Tir (via host BAIAP2) and host WASL/N-WASP. Directly binds and activates WASL/N-WASP, which stimulates actin polymerization and leads to the formation of actin pedestals at the sites of bacterial adhesion. The protein is Secreted effector protein EspF(U) (espF(U)) of Escherichia coli O157:H7.